Here is a 453-residue protein sequence, read N- to C-terminus: Exopolyphosphatase PRUNE1 (453 aa).

Met1 is modified (N-acetylmethionine). Mn(2+) is bound by residues Asp28, Asp30, Asp106, and Asp179. Residues 106-108 carry the DHH motif motif; it reads DHH. Residues 393–420 are essential for homodimerization; sequence SLLSGLSQDEEEPPLPPTPMNSLVDECP. A disordered region spans residues 396–419; that stretch reads SGLSQDEEEPPLPPTPMNSLVDEC. A Phosphoserine modification is found at Ser399. Thr410 carries the phosphothreonine modification. A Phosphoserine modification is found at Ser414.

It belongs to the PPase class C family. Prune subfamily. In terms of assembly, homooligomer. Able to homodimerize via its C-terminal domain. Interacts with NME1. Interacts with GSK3; at focal adhesion complexes where paxillin and vinculin are colocalized. It depends on Mn(2+) as a cofactor.

It localises to the cytoplasm. The protein localises to the nucleus. Its subcellular location is the cell junction. It is found in the focal adhesion. It catalyses the reaction diphosphate + H2O = 2 phosphate + H(+). With respect to regulation, activated by magnesium ions and inhibited by manganese ions. Inhibited by dipyridamole, moderately sensitive to IBMX and inhibited by vinpocetine. Its function is as follows. Phosphodiesterase (PDE) that has higher activity toward cAMP than cGMP, as substrate. Plays a role in cell proliferation, is able to induce cell motility and acts as a negative regulator of NME1. The sequence is that of Exopolyphosphatase PRUNE1 (PRUNE1) from Bos taurus (Bovine).